The following is a 262-amino-acid chain: tRNA 4-demethylwyosine(37)-methyltransferase Taw21 (262 aa).

S-adenosyl-L-methionine is bound by residues H108, F125, 148–149, and 175–176; these read DL and DA.

This sequence belongs to the class I-like SAM-binding methyltransferase superfamily. TRM5/TYW2 family.

It localises to the cytoplasm. It carries out the reaction 4-demethylwyosine(37) in tRNA(Phe) + S-adenosyl-L-methionine = isowyosine(37) in tRNA(Phe) + S-adenosyl-L-homocysteine + H(+). In terms of biological role, catalyzes the C7-methylation of 4-demethylwyosine (imG-14) at position 37 in tRNA(Phe). The sequence is that of tRNA 4-demethylwyosine(37)-methyltransferase Taw21 from Saccharolobus solfataricus (strain ATCC 35092 / DSM 1617 / JCM 11322 / P2) (Sulfolobus solfataricus).